The sequence spans 34 residues: Photosystem II reaction center protein M (34 aa).

The chain crosses the membrane as a helical span at residues 5 to 25; the sequence is ILAFIATALFILVPTAFLLII.

This sequence belongs to the PsbM family. PSII is composed of 1 copy each of membrane proteins PsbA, PsbB, PsbC, PsbD, PsbE, PsbF, PsbH, PsbI, PsbJ, PsbK, PsbL, PsbM, PsbT, PsbX, PsbY, PsbZ, Psb30/Ycf12, at least 3 peripheral proteins of the oxygen-evolving complex and a large number of cofactors. It forms dimeric complexes.

The protein resides in the plastid. The protein localises to the chloroplast thylakoid membrane. One of the components of the core complex of photosystem II (PSII). PSII is a light-driven water:plastoquinone oxidoreductase that uses light energy to abstract electrons from H(2)O, generating O(2) and a proton gradient subsequently used for ATP formation. It consists of a core antenna complex that captures photons, and an electron transfer chain that converts photonic excitation into a charge separation. This subunit is found at the monomer-monomer interface. This is Photosystem II reaction center protein M from Phaseolus vulgaris (Kidney bean).